The primary structure comprises 499 residues: Glycerol kinase (499 aa).

Thr-17 is a binding site for ADP. Residues Thr-17, Thr-18, and Ser-19 each contribute to the ATP site. Thr-17 serves as a coordination point for sn-glycerol 3-phosphate. ADP is bound at residue Arg-21. 4 residues coordinate sn-glycerol 3-phosphate: Arg-87, Glu-88, Tyr-139, and Asp-243. Arg-87, Glu-88, Tyr-139, Asp-243, and Gln-244 together coordinate glycerol. Residues Thr-265 and Gly-308 each contribute to the ADP site. ATP is bound by residues Thr-265, Gly-308, Gln-312, and Gly-409. Residues Gly-409 and Asn-413 each contribute to the ADP site.

The protein belongs to the FGGY kinase family.

It carries out the reaction glycerol + ATP = sn-glycerol 3-phosphate + ADP + H(+). It participates in polyol metabolism; glycerol degradation via glycerol kinase pathway; sn-glycerol 3-phosphate from glycerol: step 1/1. Its activity is regulated as follows. Inhibited by fructose 1,6-bisphosphate (FBP). Functionally, key enzyme in the regulation of glycerol uptake and metabolism. Catalyzes the phosphorylation of glycerol to yield sn-glycerol 3-phosphate. This chain is Glycerol kinase, found in Pseudomonas putida (strain ATCC 700007 / DSM 6899 / JCM 31910 / BCRC 17059 / LMG 24140 / F1).